The primary structure comprises 502 residues: Glycerol kinase (502 aa).

Residue Thr14 participates in ADP binding. 3 residues coordinate ATP: Thr14, Thr15, and Ser16. Residue Thr14 participates in sn-glycerol 3-phosphate binding. Residue Arg18 participates in ADP binding. Sn-glycerol 3-phosphate contacts are provided by Arg84, Glu85, Tyr136, and Asp246. Glycerol contacts are provided by Arg84, Glu85, Tyr136, Asp246, and Gln247. 2 residues coordinate ADP: Thr268 and Gly311. Residues Thr268, Gly311, Gln315, and Gly412 each contribute to the ATP site. 2 residues coordinate ADP: Gly412 and Asn416.

Belongs to the FGGY kinase family. As to quaternary structure, homotetramer and homodimer (in equilibrium). Heterodimer with EIIA-Glc. Binds 1 zinc ion per glycerol kinase EIIA-Glc dimer. The zinc ion is important for dimerization.

It carries out the reaction glycerol + ATP = sn-glycerol 3-phosphate + ADP + H(+). It participates in polyol metabolism; glycerol degradation via glycerol kinase pathway; sn-glycerol 3-phosphate from glycerol: step 1/1. Activity of this regulatory enzyme is affected by several metabolites. Allosterically and non-competitively inhibited by fructose 1,6-bisphosphate (FBP) and unphosphorylated phosphocarrier protein EIIA-Glc (III-Glc), an integral component of the bacterial phosphotransferase (PTS) system. Key enzyme in the regulation of glycerol uptake and metabolism. Catalyzes the phosphorylation of glycerol to yield sn-glycerol 3-phosphate. The sequence is that of Glycerol kinase from Escherichia coli O81 (strain ED1a).